Here is a 637-residue protein sequence, read N- to C-terminus: Biosynthetic arginine decarboxylase (637 aa).

Lys101 bears the N6-(pyridoxal phosphate)lysine mark. A substrate-binding site is contributed by 286-296; the sequence is FDVGGGLAVDY.

The protein belongs to the Orn/Lys/Arg decarboxylase class-II family. SpeA subfamily. Mg(2+) is required as a cofactor. It depends on pyridoxal 5'-phosphate as a cofactor.

It carries out the reaction L-arginine + H(+) = agmatine + CO2. It functions in the pathway amine and polyamine biosynthesis; agmatine biosynthesis; agmatine from L-arginine: step 1/1. Catalyzes the biosynthesis of agmatine from arginine. This chain is Biosynthetic arginine decarboxylase, found in Shewanella halifaxensis (strain HAW-EB4).